The primary structure comprises 20 residues: Agglutinin beta-3 chain (20 aa).

Belongs to the jacalin lectin family. Tetramer of four alpha chains associated with two or four beta chains.

D-galactose-specific lectin, binds the T-antigen structure Gal-beta1,3-GalNAc (Thomsen-Friedenreich-antigen-specific lectin). Potent and selective stimulant of distinct T- and B-cell functions. Shows a unique ability to specifically recognize IgA-1 from human serum. The sequence is that of Agglutinin beta-3 chain from Artocarpus integer (Jack fruit).